Here is a 311-residue protein sequence, read N- to C-terminus: Cytosolic Fe-S cluster assembly factor Nubp1 homolog (311 aa).

Residues 1 to 21 are disordered; the sequence is MQAPPPEHCPGVESEEAGKGS. [4Fe-4S] cluster contacts are provided by Cys9, Cys23, Cys26, and Cys32. Residue 63–70 participates in ATP binding; that stretch reads GKGGVGKS. [4Fe-4S] cluster is bound by residues Cys240 and Cys243.

This sequence belongs to the Mrp/NBP35 ATP-binding proteins family. NUBP1/NBP35 subfamily. As to quaternary structure, heterotetramer of 2 Nubp1 and 2 Nubp2 chains. It depends on [4Fe-4S] cluster as a cofactor.

The protein localises to the cytoplasm. Component of the cytosolic iron-sulfur (Fe/S) protein assembly (CIA) machinery. Required for maturation of extramitochondrial Fe-S proteins. The Nubp1-Nubp2 heterotetramer forms a Fe-S scaffold complex, mediating the de novo assembly of an Fe-S cluster and its transfer to target apoproteins. This Drosophila melanogaster (Fruit fly) protein is Cytosolic Fe-S cluster assembly factor Nubp1 homolog.